Consider the following 463-residue polypeptide: MAKDMDTIVSLAKHRGFVFPGSDIYGGLSNTWDYGPLGVELKNNVKKAWWQKFITQSPFNIGIDAAILMNPKVWEASGHLNNFNDPMIDNKDSKIRYRADKLIEDYMQDVKGDENFIADGLSFEQMKKIIDDEGIVCPVSKTANWTEIRQFNLMFKTFQGVTEDSTNEIFLRPETAQGIFVNYKNVQRSMRKKLPFGIGQIGKSFRNEITPGNFIFRTREFEQMELEFFCKPGEEIEWQNYWKTFASDWLTSLNMSSENMRLRDHDEDELSHYSNATTDIEYKFPFGWGELWGIASRTDFDLRKHAEHSGEDFRYHDPETNEKYIPYCIEPSLGADRVTLAFLCDAYDEEGVEGSKDARTVLHFHPALAPYKAAILPLSKKLSGEAIKIFEQLSSKFSIDFDESQSIGKRYRRQDEIGTPYCVTFDFDSLEDNQVTVRDRDSMEQVRMPISELEAFLTEKTKF.

Arg98 and Glu174 together coordinate substrate. Residues 206–208 (RNE), 216–221 (FRTREF), 290–291 (EL), and 334–337 (GADR) contribute to the ATP site. Residue 221 to 225 (FEQME) coordinates substrate. 330–334 (EPSLG) contacts substrate.

It belongs to the class-II aminoacyl-tRNA synthetase family. As to quaternary structure, homodimer.

The protein resides in the cytoplasm. The catalysed reaction is tRNA(Gly) + glycine + ATP = glycyl-tRNA(Gly) + AMP + diphosphate. Catalyzes the attachment of glycine to tRNA(Gly). The protein is Glycine--tRNA ligase of Staphylococcus aureus (strain bovine RF122 / ET3-1).